An 866-amino-acid polypeptide reads, in one-letter code: Glycoprotein gp2 (866 aa).

Residues 1-25 (MGFIYARKLLLCMAVSIYAIGSTTT) form the signal peptide. Disordered stretches follow at residues 24–185 (TTTE…TDTT) and 319–619 (TAAT…IVPQ). Asparagine 48 carries N-linked (GlcNAc...) asparagine; by host glycosylation. A compositionally biased stretch (low complexity) spans 319–442 (TAATTTAATT…PDSSTGSTST (124 aa)). Residues 443 to 463 (AEPSSTFTLTPSTATPSTDQF) are compositionally biased toward polar residues. 2 stretches are compositionally biased toward low complexity: residues 464–499 (TGSS…EAST) and 514–526 (TPDG…NTTP). N-linked (GlcNAc...) asparagine; by host glycosylation occurs at asparagine 518. Polar residues predominate over residues 535–561 (FADTQQTPDNGVSTQHTTINDHTTANA). A compositionally biased stretch (basic residues) spans 564-574 (HAGHHRGRAGG). Residues asparagine 611 and asparagine 659 are each glycosylated (N-linked (GlcNAc...) asparagine; by host). The chain crosses the membrane as a helical span at residues 835–855 (FALVAATTLTVTILCLLCCLY).

It localises to the virion membrane. Functionally, virulence factor. In Equus caballus (Horse), this protein is Glycoprotein gp2.